A 224-amino-acid polypeptide reads, in one-letter code: Non-structural protein V (224 aa).

Polar residues predominate over residues 54 to 65 (QKNIQHPTASHQ). Disordered stretches follow at residues 54-94 (QKNI…TQIP) and 150-172 (TEFK…GHRR). 8 residues coordinate Zn(2+): His170, Cys189, Cys193, Cys205, Cys207, Cys210, Cys214, and Cys217.

It belongs to the paramyxoviruses V protein family. As to quaternary structure, interacts with host IFIH1/MDA5 and DHX58/LGP2. Forms with host DDB1, CUL4A, STAT1, STAT2 and STAT3 the mumps virus V-dependent complex (VDC).

It is found in the virion. The protein resides in the host cytoplasm. Its function is as follows. Plays an essential role in the inhibition of host immune response. Prevents the establishment of cellular antiviral state by blocking interferon-alpha/beta (IFN-alpha/beta) production and signaling pathway. Interacts with host IFIH1/MDA5 and DHX58/LGP2 to inhibit the transduction pathway involved in the activation of IFN-beta promoter, thus protecting the virus against cell antiviral state. Blocks the type I and II interferon signaling pathways by interacting with host STAT1, STAT2 and STAT3, and mediating their ubiquitination and subsequent proteasomal degradation. This chain is Non-structural protein V, found in Homo sapiens (Human).